Here is a 238-residue protein sequence, read N- to C-terminus: Uridylate kinase (238 aa).

Residue 12–15 (KLSG) coordinates ATP. Gly-54 lines the UMP pocket. ATP is bound by residues Gly-55 and Arg-59. Residues Asp-74 and 135–142 (TGNPFFTT) contribute to the UMP site. Thr-162, Asn-163, Tyr-168, and Asp-171 together coordinate ATP.

Belongs to the UMP kinase family. Homohexamer.

The protein resides in the cytoplasm. The enzyme catalyses UMP + ATP = UDP + ADP. Its pathway is pyrimidine metabolism; CTP biosynthesis via de novo pathway; UDP from UMP (UMPK route): step 1/1. With respect to regulation, inhibited by UTP. Catalyzes the reversible phosphorylation of UMP to UDP. This chain is Uridylate kinase, found in Rhodopseudomonas palustris (strain BisA53).